The primary structure comprises 554 residues: Glypican-1 (554 aa).

Positions 1–21 (MERLCWGWWWHLGILCLMHWA) are cleaved as a signal peptide. 7 cysteine pairs are disulfide-bonded: C32–C68, C62–C256, C69–C259, C191–C343, C246–C279, C268–C415, and C272–C401. N-linked (GlcNAc...) asparagine glycans are attached at residues N79 and N116. Residues 346 to 369 (PKKTNKGSKSEERRRKGKATQEDK) are disordered. Positions 353–369 (SKSEERRRKGKATQEDK) are enriched in basic and acidic residues. Residues S486, S488, and S490 are each glycosylated (O-linked (Xyl...) (heparan sulfate) serine).

This sequence belongs to the glypican family. In terms of processing, O-glycosylated with heparan sulfate side chains.

The protein resides in the cell membrane. Its subcellular location is the secreted. It localises to the extracellular space. Functionally, cell surface proteoglycan that bears heparan sulfate. This chain is Glypican-1 (gpc1), found in Xenopus tropicalis (Western clawed frog).